The following is a 108-amino-acid chain: Large ribosomal subunit protein uL24 (108 aa).

This sequence belongs to the universal ribosomal protein uL24 family. Part of the 50S ribosomal subunit.

One of two assembly initiator proteins, it binds directly to the 5'-end of the 23S rRNA, where it nucleates assembly of the 50S subunit. Functionally, one of the proteins that surrounds the polypeptide exit tunnel on the outside of the subunit. This is Large ribosomal subunit protein uL24 from Mycoplasmopsis synoviae (strain 53) (Mycoplasma synoviae).